Consider the following 1433-residue polypeptide: Probable serine/threonine-protein kinase DDB_G0277989 (1433 aa).

ATP contacts are provided by residues 1-4 (MNEI) and K41. The Protein kinase 1 domain maps to 1–272 (MNEIIVGEYK…EFDDFTHPLS (272 aa)). D151 (proton acceptor) is an active-site residue. 2 stretches are compositionally biased toward low complexity: residues 332-362 (NNNNNNNNNNNNNNNNNNNNNNNNNNNNNNN) and 533-550 (TATTTPTPTATTPTTTTA). Disordered stretches follow at residues 332 to 366 (NNNNNNNNNNNNNNNNNNNNNNNNNNNNNNNSDGP) and 521 to 550 (PSSETTPRPPTPTATTTPTPTATTPTTTTA). One can recognise a Protein kinase 2 domain in the interval 1177–1433 (IYDKRYYIQK…QPHVCKSFKK (257 aa)).

It belongs to the protein kinase superfamily. Ser/Thr protein kinase family.

The catalysed reaction is L-seryl-[protein] + ATP = O-phospho-L-seryl-[protein] + ADP + H(+). It catalyses the reaction L-threonyl-[protein] + ATP = O-phospho-L-threonyl-[protein] + ADP + H(+). In Dictyostelium discoideum (Social amoeba), this protein is Probable serine/threonine-protein kinase DDB_G0277989.